The sequence spans 182 residues: Putative adenylate kinase (182 aa).

Gly-10, Gly-12, Lys-13, Thr-14, and Ser-15 together coordinate ATP. Residues 30–53 (HLNEMIKEEHLYTEVDEVRDAVIA) are NMP. An LID region spans residues 104-114 (ARGYSEEKIRE). The ATP site is built by Arg-105 and Lys-143.

The protein belongs to the adenylate kinase family. AK6 subfamily. In terms of assembly, interacts with uS11. Not a structural component of 40S pre-ribosomes, but transiently interacts with them by binding to uS11.

The catalysed reaction is AMP + ATP = 2 ADP. It carries out the reaction ATP + H2O = ADP + phosphate + H(+). Its function is as follows. Broad-specificity nucleoside monophosphate (NMP) kinase that catalyzes the reversible transfer of the terminal phosphate group between nucleoside triphosphates and monophosphates. Also has ATPase activity. Involved in the late maturation steps of the 30S ribosomal particles, specifically 16S rRNA maturation. While NMP activity is not required for ribosome maturation, ATPase activity is. Associates transiently with small ribosomal subunit protein uS11. ATP hydrolysis breaks the interaction with uS11. May temporarily remove uS11 from the ribosome to enable a conformational change of the ribosomal RNA that is needed for the final maturation step of the small ribosomal subunit. This chain is Putative adenylate kinase, found in Methanosarcina barkeri (strain Fusaro / DSM 804).